The sequence spans 305 residues: Putative HTH-type transcriptional regulatory protein Saci_1344 (305 aa).

The HTH cro/C1-type domain maps to 128-183 (LREKREEKNMSLGELSQRLGVSRISVYDYEKEDSYVSIEVAEKLIEIFGDEVIGDI). Positions 139–158 (LGELSQRLGVSRISVYDYEK) form a DNA-binding region, H-T-H motif.

This is Putative HTH-type transcriptional regulatory protein Saci_1344 from Sulfolobus acidocaldarius (strain ATCC 33909 / DSM 639 / JCM 8929 / NBRC 15157 / NCIMB 11770).